The sequence spans 121 residues: Large ribosomal subunit protein bL12 (121 aa).

It belongs to the bacterial ribosomal protein bL12 family. As to quaternary structure, homodimer. Part of the ribosomal stalk of the 50S ribosomal subunit. Forms a multimeric L10(L12)X complex, where L10 forms an elongated spine to which 2 to 4 L12 dimers bind in a sequential fashion. Binds GTP-bound translation factors.

Forms part of the ribosomal stalk which helps the ribosome interact with GTP-bound translation factors. Is thus essential for accurate translation. This Shewanella frigidimarina (strain NCIMB 400) protein is Large ribosomal subunit protein bL12.